Reading from the N-terminus, the 331-residue chain is Glyceraldehyde-3-phosphate dehydrogenase (331 aa).

NAD(+) contacts are provided by residues 12-13, aspartate 34, arginine 78, and threonine 120; that span reads RI. Residues 149–151, threonine 180, 209–210, and arginine 232 contribute to the D-glyceraldehyde 3-phosphate site; these read SCT and TG. The active-site Nucleophile is cysteine 150. Residue asparagine 314 coordinates NAD(+).

This sequence belongs to the glyceraldehyde-3-phosphate dehydrogenase family. In terms of assembly, homotetramer.

Its subcellular location is the cytoplasm. The enzyme catalyses D-glyceraldehyde 3-phosphate + phosphate + NAD(+) = (2R)-3-phospho-glyceroyl phosphate + NADH + H(+). Its pathway is carbohydrate degradation; glycolysis; pyruvate from D-glyceraldehyde 3-phosphate: step 1/5. Catalyzes the oxidative phosphorylation of glyceraldehyde 3-phosphate (G3P) to 1,3-bisphosphoglycerate (BPG) using the cofactor NAD. The first reaction step involves the formation of a hemiacetal intermediate between G3P and a cysteine residue, and this hemiacetal intermediate is then oxidized to a thioester, with concomitant reduction of NAD to NADH. The reduced NADH is then exchanged with the second NAD, and the thioester is attacked by a nucleophilic inorganic phosphate to produce BPG. This chain is Glyceraldehyde-3-phosphate dehydrogenase (gapA), found in Escherichia fergusonii (strain ATCC 35469 / DSM 13698 / CCUG 18766 / IAM 14443 / JCM 21226 / LMG 7866 / NBRC 102419 / NCTC 12128 / CDC 0568-73).